The sequence spans 165 residues: Protein SprT (165 aa).

In terms of domain architecture, SprT-like spans 22-163 (LAQANLKLGR…RCVHCGEQLT (142 aa)). A Zn(2+)-binding site is contributed by His-78. Residue Glu-79 is part of the active site. Residue His-82 coordinates Zn(2+).

It belongs to the SprT family. It depends on Zn(2+) as a cofactor.

It is found in the cytoplasm. The protein is Protein SprT of Escherichia fergusonii (strain ATCC 35469 / DSM 13698 / CCUG 18766 / IAM 14443 / JCM 21226 / LMG 7866 / NBRC 102419 / NCTC 12128 / CDC 0568-73).